The following is a 359-amino-acid chain: Innexin inx2 (359 aa).

Over 1–22 the chain is Cytoplasmic; sequence MFDVFGSVKGLLKLDSVCIDNN. The chain crosses the membrane as a helical span at residues 23–43; sequence LFRLHYKATVIILIAFSLLVT. Residues 44-109 lie on the Extracellular side of the membrane; it reads SRQYIGDPID…KDEVKYHKYY (66 aa). Residues 110–130 traverse the membrane as a helical segment; the sequence is QWVCFVLFFQAILFYIPRYLW. At 131–180 the chain is on the cytoplasmic side; the sequence is KTWEGGRIKMLVLDLNSPVVNEQSKADRKKLLVDYFATNLHTQNFYAYRF. The chain crosses the membrane as a helical span at residues 181 to 201; it reads FICEALNFVNVVGQIYFMDLF. Topologically, residues 202 to 266 are extracellular; it reads LDGEFTTYGS…VLPLNIVNEK (65 aa). Residues 267–287 form a helical membrane-spanning segment; that stretch reads IYVFLWFWFVILSVLTGIGLV. Over 288-359 the chain is Cytoplasmic; it reads YRLATAMGPQ…AKKLEGKEIV (72 aa).

The protein belongs to the pannexin family. Widespread expression in embryo, in anterior and posterior row of neural precursors, midline precursors and in epithelial sheet of stomodeum.

The protein resides in the cell membrane. It is found in the cell junction. The protein localises to the gap junction. Structural components of the gap junctions. The sequence is that of Innexin inx2 (inx2) from Schistocerca americana (American grasshopper).